We begin with the raw amino-acid sequence, 326 residues long: Centriolar satellite-associated tubulin polyglutamylase complex regulator 1 (326 aa).

Positions 1-111 (MLSPERLALP…HCLLQLLCPD (111 aa)) are required for interaction with PCM1. A required for interaction with TPGS1, LRRC49, and TTLL1 region spans residues 1–225 (MLSPERLALP…SCPPPALVKE (225 aa)).

Belongs to the CSTPP1 family. As to quaternary structure, interacts with PCM1. Interacts with TTLL1, TPGS1, TPGS2 and LRRC49; the interactions link CSTPP1 to the complex TPGC. Binds to alpha-tubulin.

It is found in the cytoplasm. It localises to the cytoskeleton. Its subcellular location is the microtubule organizing center. The protein localises to the centrosome. The protein resides in the centriolar satellite. In terms of biological role, regulator of the tubulin polyglutamylase complex (TPGC) that controls cytoskeletal organization, nuclear shape, and cilium disassembly by balancing microtubule and actin assembly. Regulates the assembly and stability of the TPGC and thereby modulates polyglutamylation of the microtubule, which antagonizes MAP4 binding. The polypeptide is Centriolar satellite-associated tubulin polyglutamylase complex regulator 1 (CSTPP1) (Bos taurus (Bovine)).